The primary structure comprises 146 residues: MKKRVTIYTDGACSGNPGRGGWGALMMYGTVNRELSGYEPATTNNRMELTAAIEGLDALKEPCVVDLYSDSAYLVNALNQGWLKRWTTNNWTTSAKKSVENIDLWKKILKLVTLHQVTFHKVKGHSDNPFNNRCDELARQAIKNNS.

Residues Met1–Lys143 form the RNase H type-1 domain. Mg(2+)-binding residues include Asp10, Glu48, Asp70, and Asp135.

This sequence belongs to the RNase H family. In terms of assembly, monomer. It depends on Mg(2+) as a cofactor.

The protein localises to the cytoplasm. The enzyme catalyses Endonucleolytic cleavage to 5'-phosphomonoester.. Its function is as follows. Endonuclease that specifically degrades the RNA of RNA-DNA hybrids. In Chlorobium limicola (strain DSM 245 / NBRC 103803 / 6330), this protein is Ribonuclease H.